The chain runs to 305 residues: tRNA dimethylallyltransferase (305 aa).

Gly-8–Thr-15 provides a ligand contact to ATP. Thr-10–Thr-15 provides a ligand contact to substrate. The interval Asp-33–Gln-36 is interaction with substrate tRNA.

The protein belongs to the IPP transferase family. In terms of assembly, monomer. It depends on Mg(2+) as a cofactor.

It carries out the reaction adenosine(37) in tRNA + dimethylallyl diphosphate = N(6)-dimethylallyladenosine(37) in tRNA + diphosphate. In terms of biological role, catalyzes the transfer of a dimethylallyl group onto the adenine at position 37 in tRNAs that read codons beginning with uridine, leading to the formation of N6-(dimethylallyl)adenosine (i(6)A). The chain is tRNA dimethylallyltransferase from Anaeromyxobacter dehalogenans (strain 2CP-1 / ATCC BAA-258).